The sequence spans 635 residues: MMVKIKNIIILFCIFGLLSNVSSLSSSSSSSQSSDNNGNLSPIQDYDLEFLSKHLTTKTPYWILTKNGDSNSQGDGSSGNSNSNSNSNSNSNSNSDSSNEPPEQCKLISIDFIARHGSRMPVLNSIEKLKEMTTSILEYKEQVNQGFNWIFNYSVPYPSDIAGNLILQGQYEHYNISKRLLKKYPLFFEPMKYKPQSYSITSTAISRTGISASAFSYGLLQGTGSLGVDGFQPVFIETASLDQDILLRFFATCNQYVDQLKNGTLINKDEQTKWNQMVFPNISNEISERLGLSDIWLPTSNVISDIFEACAYEISINNISDHWCSLLSKQNILDWEYSQDLSNYWLKSYGHEINYQIATPLLNDILSGFDIYINNNNNGSSSSSSSSSSNNGDNSGSNGSSGSGSSTSTSSNDNGSTNNNDNKVEPTSILRFGHAETIIPFISLLGLYKDEQKLFANSSTEQIENRKFRTSVVSPYASNIAMFLFDCGSAADGFKILVQHNELPVLVPGCDEIYCDYQQFKSIFKQGIDNFKWNSYCNINDDDSGSSGGDSGNGNGNDSHSKKSSYFLAIFIPITFLVGGTIGGIFTYFSYEKIMQVKNRKKLTQYGNDEFISSPKSKSFSFKPTKFDSRSPLIQ.

The N-terminal stretch at 1 to 23 is a signal peptide; it reads MMVKIKNIIILFCIFGLLSNVSS. Residues 24 to 565 lie on the Extracellular side of the membrane; the sequence is LSSSSSSSQS…GNDSHSKKSS (542 aa). A disordered region spans residues 66-102; sequence KNGDSNSQGDGSSGNSNSNSNSNSNSNSNSDSSNEPP. A compositionally biased stretch (low complexity) spans 67 to 99; the sequence is NGDSNSQGDGSSGNSNSNSNSNSNSNSNSDSSN. His116 is an active-site residue. Low complexity predominate over residues 380-421; sequence SSSSSSSSSSNNGDNSGSNGSSGSGSSTSTSSNDNGSTNNND. The tract at residues 380-425 is disordered; sequence SSSSSSSSSSNNGDNSGSNGSSGSGSSTSTSSNDNGSTNNNDNKVE. Residues 566–586 form a helical membrane-spanning segment; that stretch reads YFLAIFIPITFLVGGTIGGIF. The Cytoplasmic segment spans residues 587-635; that stretch reads TYFSYEKIMQVKNRKKLTQYGNDEFISSPKSKSFSFKPTKFDSRSPLIQ. A compositionally biased stretch (low complexity) spans 614-624; that stretch reads SPKSKSFSFKP. The interval 614–635 is disordered; sequence SPKSKSFSFKPTKFDSRSPLIQ.

It belongs to the histidine acid phosphatase family. MINPP1 subfamily.

The protein resides in the membrane. The enzyme catalyses 1D-myo-inositol hexakisphosphate + H2O = 1D-myo-inositol 1,2,4,5,6-pentakisphosphate + phosphate. It catalyses the reaction 1D-myo-inositol 1,2,4,5,6-pentakisphosphate + H2O = 1D-myo-inositol 1,2,5,6-tetrakisphosphate + phosphate. It carries out the reaction 1D-myo-inositol 1,2,5,6-tetrakisphosphate + H2O = 1D-myo-inositol 1,2,6-trisphosphate + phosphate. The catalysed reaction is 1D-myo-inositol 1,2,6-trisphosphate + H2O = 1D-myo-inositol 1,2-bisphosphate + phosphate. The enzyme catalyses 1D-myo-inositol 1,2-bisphosphate + H2O = 1D-myo-inositol 2-phosphate + phosphate. It catalyses the reaction (2R)-2,3-bisphosphoglycerate + H2O = (2R)-2-phosphoglycerate + phosphate. Probable multiple inositol polyphosphate phosphatase that hydrolyzes 1D-myo-inositol 1,3,4,5,6-pentakisphosphate (InsP5[2OH]) and 1D-myo-inositol hexakisphosphate (InsP6) to a range of less phosphorylated inositol phosphates. This regulates the availability of these various small molecule second messengers and metal chelators which control many aspects of cell physiology. May have a dual substrate specificity, and function as a 2,3-bisphosphoglycerate 3-phosphatase hydrolyzing 2,3-bisphosphoglycerate to 2-phosphoglycerate. 2,3-bisphosphoglycerate (BPG) is formed as part of the Rapoport-Luebering glycolytic bypass. This is Multiple inositol polyphosphate phosphatase 1 (mipp1) from Dictyostelium discoideum (Social amoeba).